A 575-amino-acid polypeptide reads, in one-letter code: Potassium-transporting ATPase potassium-binding subunit (575 aa).

The next 12 helical transmembrane spans lie at 4–24 (SAWG…WPVG), 61–81 (LRYA…VYAL), 133–153 (GLAV…FALI), 180–200 (LWVL…QGVI), 258–278 (LANL…CFAF), 289–309 (WAVL…VIPA), 344–364 (IDAS…AVIA), 372–392 (LGGM…GGVG), 394–414 (GLYG…LMIG), 431–451 (LISI…AVAV), 499–519 (LLGL…LAIA), and 545–565 (LLIG…LALG).

Belongs to the KdpA family. As to quaternary structure, the system is composed of three essential subunits: KdpA, KdpB and KdpC.

Its subcellular location is the cell inner membrane. In terms of biological role, part of the high-affinity ATP-driven potassium transport (or Kdp) system, which catalyzes the hydrolysis of ATP coupled with the electrogenic transport of potassium into the cytoplasm. This subunit binds the periplasmic potassium ions and delivers the ions to the membrane domain of KdpB through an intramembrane tunnel. The protein is Potassium-transporting ATPase potassium-binding subunit of Variovorax paradoxus (strain S110).